Reading from the N-terminus, the 107-residue chain is Death-associated protein-like 1 (107 aa).

Residues Met1–Arg26 are disordered.

Detected in the corneal epithelium, and only in trace amounts in the liver, bladder, brain, heart, and stomach.

In terms of biological role, may play a role in the early stages of epithelial differentiation or in apoptosis. The chain is Death-associated protein-like 1 (DAPL1) from Bos taurus (Bovine).